A 54-amino-acid chain; its full sequence is MNYWVLALHYNWASSEMVKQAIHLKDCSPEDLQEGIEKKLITAEQYKEITGEAI.

It to B.subtilis XkdX.

This is an uncharacterized protein from Bacillus subtilis (strain 168).